The chain runs to 372 residues: F-box/kelch-repeat protein At5g49000 (372 aa).

The span at 1-11 shows a compositional bias: basic residues; that stretch reads MSSPERKRKKR. The interval 1–24 is disordered; the sequence is MSSPERKRKKRSLEPSPESTPNPS. Positions 19-65 constitute an F-box domain; sequence STPNPSLPDDLIVSILARVSRLYYPILSLVSKSSRTLVTSPELYKTR. 4 Kelch repeats span residues 131–177, 179–224, 226–271, and 273–312; these read NIYA…VVDG, IYVA…VIEG, IYIF…LYCY, and PGGI…GGKM.

The chain is F-box/kelch-repeat protein At5g49000 from Arabidopsis thaliana (Mouse-ear cress).